We begin with the raw amino-acid sequence, 2023 residues long: Protein Daple (2023 aa).

The Calponin-homology (CH) domain maps to 11 to 131; that stretch reads NFMDSPLVVW…RMLLLILGCA (121 aa). Coiled coils occupy residues 250–415, 458–1064, and 1105–1419; these read RQHL…LLEE, NESA…VEKN, and LKQI…QYKF. The segment at 1013-1035 is disordered; the sequence is RHEEEAAHSEISQQTLGQTRSLP. Residues 1022 to 1033 are compositionally biased toward polar residues; that stretch reads EISQQTLGQTRS. Disordered stretches follow at residues 1441–1824 and 1837–2023; these read KPKK…GSAS and LRSN…YGCV. Positions 1442 to 1460 are enriched in basic and acidic residues; it reads PKKESSRERPDAPRERIRS. The segment covering 1478–1491 has biased composition (pro residues); sequence SAPPPPPPPLPPRQ. 2 stretches are compositionally biased toward polar residues: residues 1497 to 1518 and 1564 to 1585; these read DSMNSQSVEENHVQSPTLSSPA and TCSTPLSRNSHNAPGFTSSSSL. 2 stretches are compositionally biased toward low complexity: residues 1623–1643 and 1667–1704; these read SAEFSRNTSSSNSPVSSKGSL and RLSQSSLLPRSSTLPCDSPSASRPSQRPASRRPSSPGS. A GBA motif is present at residues 1700-1728; that stretch reads SSPGSEMVTLEEFLQESNALSPPTVQTGS. 4 stretches are compositionally biased toward polar residues: residues 1714–1727, 1752–1763, 1785–1799, and 1809–1824; these read QESNALSPPTVQTG, TPTNYVTPTVKT, LTDTSTPPSHSQTLP, and ALQQSSPRGSVGGSAS. Residues 1890–1904 are compositionally biased toward basic and acidic residues; the sequence is VDPRRLSLAQPRDEF. The span at 1927 to 1945 shows a compositional bias: low complexity; it reads GSGSSRAGAARSGSAQPRG. Residues 1974 to 1988 show a composition bias toward basic and acidic residues; it reads QEQREAESPLLKKAD. Polar residues predominate over residues 1989 to 2014; the sequence is TTNLSYASKEQPTSKPASPDPNNDPQ. The PDZ-binding signature appears at 2020–2023; sequence YGCV.

Belongs to the CCDC88 family.

It is found in the cytoplasm. Its subcellular location is the cell junction. Positive regulator of Wnt signaling, acting synergistically with dvl2. Functions upstream of ctnnb1/beta-catenin in the canonical Wnt pathway, and also activates jnk in the Wnt/planar cell polarity (PCP) pathway. Acts as a non-receptor guanine nucleotide exchange factor which binds to and activates guanine nucleotide-binding protein G(i) alpha (Gi-alpha) subunits. This promotes apical cell constriction and subsequent bending of the neural plate during neurulation via arhgef18. The sequence is that of Protein Daple from Danio rerio (Zebrafish).